Here is a 298-residue protein sequence, read N- to C-terminus: Bifunctional methyltransferase/endonuclease (298 aa).

Residues 1–79 form a probable methylated-DNA--protein-cysteine methyltransferase region; sequence MQSIDLYSYL…SLGIDEKIRR (79 aa). The active site involves cysteine 56. The segment at 80 to 298 is endonuclease V; that stretch reads LRNDGIEINN…TVALRRNNII (219 aa). Mg(2+) contacts are provided by aspartate 137 and aspartate 197.

This sequence in the N-terminal section; belongs to the MGMT family. It in the C-terminal section; belongs to the endonuclease V family. Mg(2+) is required as a cofactor.

The protein localises to the cytoplasm. The enzyme catalyses Endonucleolytic cleavage at apurinic or apyrimidinic sites to products with a 5'-phosphate.. In terms of biological role, DNA repair enzyme involved in the repair of deaminated bases. Selectively cleaves double-stranded DNA at the second phosphodiester bond 3' to a deoxyinosine leaving behind the intact lesion on the nicked DNA. This is Bifunctional methyltransferase/endonuclease from Picrophilus torridus (strain ATCC 700027 / DSM 9790 / JCM 10055 / NBRC 100828 / KAW 2/3).